The following is a 397-amino-acid chain: Elongation factor Tu (397 aa).

In terms of domain architecture, tr-type G spans K10 to E206. A G1 region spans residues G19–T26. G19–T26 lines the GTP pocket. T26 contacts Mg(2+). Positions G60–N64 are G2. Positions D81 to G84 are G3. GTP-binding positions include D81–H85 and N136–D139. A G4 region spans residues N136–D139. The interval S174 to L176 is G5.

Belongs to the TRAFAC class translation factor GTPase superfamily. Classic translation factor GTPase family. EF-Tu/EF-1A subfamily. In terms of assembly, monomer.

It is found in the cytoplasm. The enzyme catalyses GTP + H2O = GDP + phosphate + H(+). Its function is as follows. GTP hydrolase that promotes the GTP-dependent binding of aminoacyl-tRNA to the A-site of ribosomes during protein biosynthesis. The sequence is that of Elongation factor Tu from Clostridium perfringens (strain ATCC 13124 / DSM 756 / JCM 1290 / NCIMB 6125 / NCTC 8237 / Type A).